The following is a 2493-amino-acid chain: Non-reducing polyketide synthase pkiA (2493 aa).

Residues 129–243 are N-terminal acylcarrier protein transacylase domain (SAT); the sequence is PLLMMTHFVQ…VQYDENRATI (115 aa). Catalysis depends on Cys-160, which acts as the Nucleophile; for transacylase activity. Residue His-274 is the Proton donor/acceptor; for transacylase activity of the active site. The 418-residue stretch at 401–818 folds into the Ketosynthase family 3 (KS3) domain; it reads ETDIAIVGMA…GSNASMVITQ (418 aa). Residues Cys-567, His-702, and His-741 each act as for beta-ketoacyl synthase activity in the active site. The segment at 926–1261 is malonyl-CoA:ACP transacylase (MAT); that stretch reads CFGGQVGRSI…EYAPLLLPPY (336 aa). The segment at 1259–1387 is N-terminal hotdog fold; that stretch reads PPYQFERTRH…AHISMHDVRC (129 aa). Residues 1259-1562 form the PKS/mFAS DH domain; it reads PPYQFERTRH…YSRVAKSLFT (304 aa). The active-site Proton acceptor; for dehydratase activity is His-1291. Residues 1297–1558 are product template (PT) domain; the sequence is APIAPATLLL…LGLRYSRVAK (262 aa). The segment at 1415–1562 is C-terminal hotdog fold; it reads VDDILQGRNV…YSRVAKSLFT (148 aa). Asp-1471 (proton donor; for dehydratase activity) is an active-site residue. A Carrier domain is found at 1588–1662; that stretch reads KDLVSRVKAV…DLVQAVQSAL (75 aa). An O-(pantetheine 4'-phosphoryl)serine modification is found at Ser-1622. The interval 1822–2063 is methyltransferase (CMeT) domain; it reads REYPEYGGAS…YGHVDWTDGE (242 aa). Residues 2128–2366 are NADPH-binding domain; it reads VTGATGSLGS…TPVDVAARII (239 aa).

It depends on pantetheine 4'-phosphate as a cofactor.

It carries out the reaction decanoyl-[ACP] + 4 malonyl-CoA + AH2 + S-adenosyl-L-methionine + 3 H(+) = 2,4-dihydroxy-3-methyl-6-(2-oxoundecyl)benzaldehyde + holo-[ACP] + A + S-adenosyl-L-homocysteine + 4 CO2 + 4 CoA + H2O. The protein operates within secondary metabolite biosynthesis. Its function is as follows. Non-reducing polyketide synthase; part of the pki gene cluster that mediates the biosynthesis of 2,4-dihydroxy-3-methyl-6-(2-oxoundecyl)benzaldehyde. The first step in the pathway is the generation of the decanoyl starter unit by the FAS composed of subunits pkiB and pkiC, which is then transferred directly from the FAS to the SAT domain of the non-reducing polyketide synthase pkiA. PkiA condenses the decanoyyl starter unit with 4 malonyl-CoA units and performs one methylation step to yield 2,4-dihydroxy-3-methyl-6-(2-oxoundecyl)benzaldehyde. In Emericella nidulans (strain FGSC A4 / ATCC 38163 / CBS 112.46 / NRRL 194 / M139) (Aspergillus nidulans), this protein is Non-reducing polyketide synthase pkiA.